Here is a 46-residue protein sequence, read N- to C-terminus: uncharacterized protein (46 aa).

This is an uncharacterized protein from Escherichia coli.